The primary structure comprises 88 residues: Small ribosomal subunit protein uS15c (88 aa).

The protein belongs to the universal ribosomal protein uS15 family. In terms of assembly, part of the 30S ribosomal subunit.

Its subcellular location is the plastid. The protein localises to the chloroplast. This is Small ribosomal subunit protein uS15c (rps15) from Calycanthus floridus var. glaucus (Eastern sweetshrub).